The following is a 141-amino-acid chain: Small ribosomal subunit protein uS12 (141 aa).

Position 102 is a 3-methylthioaspartic acid (Asp102). Positions 115 to 141 (GDASGVEKRRQQRSLYGAKRPKKEASK) are disordered.

It belongs to the universal ribosomal protein uS12 family. Part of the 30S ribosomal subunit. Contacts proteins S8 and S17. May interact with IF1 in the 30S initiation complex.

Its function is as follows. With S4 and S5 plays an important role in translational accuracy. In terms of biological role, interacts with and stabilizes bases of the 16S rRNA that are involved in tRNA selection in the A site and with the mRNA backbone. Located at the interface of the 30S and 50S subunits, it traverses the body of the 30S subunit contacting proteins on the other side and probably holding the rRNA structure together. The combined cluster of proteins S8, S12 and S17 appears to hold together the shoulder and platform of the 30S subunit. The polypeptide is Small ribosomal subunit protein uS12 (Ureaplasma parvum serovar 3 (strain ATCC 27815 / 27 / NCTC 11736)).